Consider the following 434-residue polypeptide: MSWVQVNLLARGLSRGWGSICRTVLSGTPFAQPSLQARGLHCSAVTHKDDVWLVPRPSEPQKKPIKVPAMHEDLFRPSGNGEQDKASFLNAVRSFGEHNVRKRGHVDFIYLALRKMPEFGVERDLSVYNLLLDVFPKEVFRPRNAIQRIFVHYPRQQECGVAVLEQMERHGVMPNTETEFLLIQVFGHKSYPMLKFLRMKLWFTRFKNINPYPVPRDLPQDPLDLAKLGLRHMEPDLSAKVTVYQMSLPSESTGIEDPTQPHIVGIQSPDQQAALARHNPSRPVFVEGPFPLWLRNKCVYYHILRADLPPPEEETVEEIPEEWNLYYPMQLDLEYSRSAWDNYEFDMDEVTEGPVFAMCMTGAHDQATLVKWIQGLQETNPTLAQIPVVFRLARSTGELLATTRLEGQSPPHSPPKGPEEDDEAIQAQQRQGQS.

The N-terminal 48 residues, 1-48 (MSWVQVNLLARGLSRGWGSICRTVLSGTPFAQPSLQARGLHCSAVTHK), are a transit peptide targeting the mitochondrion. K371 participates in a covalent cross-link: Glycyl lysine isopeptide (Lys-Gly) (interchain with G-Cter in ubiquitin). Residues 403 to 434 (TRLEGQSPPHSPPKGPEEDDEAIQAQQRQGQS) are disordered.

It belongs to the ECSIT family. In terms of assembly, interacts with MAP3K1, SMAD4 and TRAF6. Interacts with SMAD1 only after BMP4-treatment. Part of the mitochondrial complex I assembly/MCIA complex that comprises at least the core subunits TMEM126B, NDUFAF1, ECSIT and ACAD9 and complement subunits such as COA1 and TMEM186. Interacts with NDUFAF1. Interacts with ACAD9. Interacts with TRIM59. Interacts with TMEM70 and TMEM242. Interacts (when ubiquitinated) with NF-kappa-B subunits RELA and NFKB1. Interacts with RIGI, IFIT1 and MAVS; these interactions promote RLR-mediated type I IFN induction. Interacts with SQSTM1; this interaction inhibits TLR4 signaling via functional regulation of the TRAF6-ECSIT complex. Interacts with cereblon/CRBN; this interaction inhibits the ubiquitination of ECSIT. In terms of processing, ubiquitinated on Lys-371; leading to translocation in the nucleus together with RELA and NFKB1 and expression of NF-kappa-B-dependent genes.

It is found in the cytoplasm. It localises to the nucleus. The protein resides in the mitochondrion. Adapter protein that plays a role in different signaling pathways including TLRs and IL-1 pathways or innate antiviral induction signaling. Plays a role in the activation of NF-kappa-B by forming a signal complex with TRAF6 and TAK1/MAP3K7 to activate TAK1/MAP3K7 leading to activation of IKKs. Once ubiquitinated, interacts with the dissociated RELA and NFKB1 proteins and translocates to the nucleus where it induces NF-kappa-B-dependent gene expression. Plays a role in innate antiviral immune response by bridging the pattern recognition receptors RIGI and MDA5/IFIT1 to the MAVS complex at the mitochondrion. Promotes proteolytic activation of MAP3K1. Involved in the BMP signaling pathway. Required for normal embryonic development. Its function is as follows. As part of the MCIA complex, involved in the assembly of the mitochondrial complex I. This is Evolutionarily conserved signaling intermediate in Toll pathway, mitochondrial from Rattus norvegicus (Rat).